Consider the following 378-residue polypeptide: MSKEPLILWLMIEFWWLYLTPVTSETVVTEVLGHRVTLPCLYSSWSHNSNSMCWGKDQCPYSGCKEALIRTDGMRVTSRKSAKYRLQGTIPRGDVSLTILNPSESDSGVYCCRIEVPGWFNDVKINVRLNLQRASTTTHRTATTTTRRTTTTSPTTTRQMTTTPAALPTTVVTTPDLTTGTPLQMTTIAVFTTANTCLSLTPSTLPEEATGLLTPEPSKEGPILTAESETVLPSDSWSSVESTSADTVLLTSKESKVWDLPSTSHVSMWKTSDSVSSPQPGASDTAVPEQNKTTKTGQMDGIPMSMKNEMPISQLLMIIAPSLGFVLFALFVAFLLRGKLMETYCSQKHTRLDYIGDSKNVLNDVQHGREDEDGLFTL.

Positions 1-24 are cleaved as a signal peptide; the sequence is MSKEPLILWLMIEFWWLYLTPVTS. In terms of domain architecture, Ig-like V-type spans 25–126; the sequence is ETVVTEVLGH…PGWFNDVKIN (102 aa). At 25–314 the chain is on the extracellular side; sequence ETVVTEVLGH…SMKNEMPISQ (290 aa). Intrachain disulfides connect Cys40-Cys112, Cys53-Cys64, and Cys59-Cys111. Disordered regions lie at residues 136–160 and 269–304; these read TTTH…TRQM and WKTS…GIPM. Positions 269–297 are enriched in polar residues; that stretch reads WKTSDSVSSPQPGASDTAVPEQNKTTKTG. N-linked (GlcNAc...) asparagine glycosylation is present at Asn291. A helical transmembrane segment spans residues 315–335; it reads LLMIIAPSLGFVLFALFVAFL. Residues 336 to 378 lie on the Cytoplasmic side of the membrane; it reads LRGKLMETYCSQKHTRLDYIGDSKNVLNDVQHGREDEDGLFTL. Ser358 carries the phosphoserine modification.

The protein belongs to the immunoglobulin superfamily. TIM family. As to quaternary structure, interacts with MERTK; this interaction enhances TIMD4-mediated efferocytosis. Interacts with EPHA2.

The protein localises to the cell membrane. Its subcellular location is the secreted. The protein resides in the extracellular exosome. Phosphatidylserine receptor that plays different role in immune response including phagocytosis of apoptotic cells and T-cell regulation. Controls T-cell activation in a bimodal fashion, decreasing the activation of naive T-cells by inducing cell cycle arrest, while increasing proliferation of activated T-cells by activating AKT1 and ERK1/2 phosphorylations and subsequent signaling pathways. Also plays a role in efferocytosis which is the process by which apoptotic cells are removed by phagocytic cells. Mechanistically, promotes the engulfment of apoptotic cells or exogenous particles by securing them to phagocytes through direct binding to phosphatidylserine present on apoptotic cells, while other engulfment receptors such as MERTK efficiently recognize apoptotic cells and mediate their ingestion. Additionally, promotes autophagy process by suppressing NLRP3 inflammasome activity via activation of LKB1/PRKAA1 pathway in a phosphatidylserine-dependent mechanism. In terms of biological role, (Microbial infection) Plays a positive role in exosome-mediated trafficking of HIV-1 virus and its entry into immune cells. The polypeptide is T-cell immunoglobulin and mucin domain-containing protein 4 (TIMD4) (Homo sapiens (Human)).